The sequence spans 313 residues: Olfactory receptor 51A4 (313 aa).

The Extracellular segment spans residues Met1 to Ile27. Asn5 carries N-linked (GlcNAc...) asparagine glycosylation. The helical transmembrane segment at Trp28–Leu48 threads the bilayer. Residues Phe49–Ser56 lie on the Cytoplasmic side of the membrane. Residues Leu57–Leu77 traverse the membrane as a helical segment. Over Ser78 to Ala101 the chain is Extracellular. Cys99 and Cys191 form a disulfide bridge. A helical transmembrane segment spans residues Gln102–Phe122. Topologically, residues Asp123–Val141 are cytoplasmic. A helical membrane pass occupies residues Arg142–Pro162. Residues Phe163 to Val198 are Extracellular-facing. The chain crosses the membrane as a helical span at residues Ile199–Ser218. At Tyr219–Ala238 the chain is on the cytoplasmic side. The helical transmembrane segment at Leu239–Leu259 threads the bilayer. The Extracellular segment spans residues Ala260–Asn274. A helical transmembrane segment spans residues Val275–Val295. Residues Lys296 to Ile313 are Cytoplasmic-facing.

It belongs to the G-protein coupled receptor 1 family.

Its subcellular location is the cell membrane. Odorant receptor. In Homo sapiens (Human), this protein is Olfactory receptor 51A4 (OR51A4).